We begin with the raw amino-acid sequence, 350 residues long: MGPHFTLLCAALAGCLLPAEGCVICDPSVVLALKSLEKDYLPGHLDAKHHKAMMERVENAVKDFQELSLNEDAYMGVVDEATLQKGSWSLLKDLKRITDSDVKGDLFVKELFWMLHLQKETFATYVARFQKEAYCPNKCGVMLQTLIWCKNCKKEVHACRKSYDCGERNVEVPQMEDMILDCELNWHQASEGLTDYSFYRVWGNNTETLVSKGKEATLTKPMVGPEDAGSYRCELGSVNSSPATIINFHVTVLPKMIKEEKPSPNIVTPGEATTESSISLQPLQPEKMLASRLLGLLICGSLALITGLTFAIFRRRKVIDFIKSSLFGLGSGAAEQTQVPKEKATDSRQQ.

Positions 1-21 are cleaved as a signal peptide; that stretch reads MGPHFTLLCAALAGCLLPAEG. Cystine bridges form between cysteine 22-cysteine 149, cysteine 25-cysteine 152, cysteine 135-cysteine 159, cysteine 139-cysteine 165, and cysteine 182-cysteine 233. The Extracellular portion of the chain corresponds to 22-292; the sequence is CVICDPSVVL…LQPEKMLASR (271 aa). Residues 148–160 are important for interaction with IZUMO1R; it reads WCKNCKKEVHACR. In terms of domain architecture, Ig-like C2-type spans 167-251; it reads ERNVEVPQME…PATIINFHVT (85 aa). A glycan (N-linked (GlcNAc...) asparagine) is linked at asparagine 204. Residues 293–313 form a helical membrane-spanning segment; sequence LLGLLICGSLALITGLTFAIF. The Cytoplasmic portion of the chain corresponds to 314–350; it reads RRRKVIDFIKSSLFGLGSGAAEQTQVPKEKATDSRQQ. The residue at position 325 (serine 325) is a Phosphoserine.

It belongs to the Izumo family. As to quaternary structure, monomer, homodimer; disulfide-linked and homooligomer; depending on the context. Interacts with IZUMO1R/JUNO. IZUMO1 and IZUMO1R/JUNO form a complex with 1:1 stoichiometry. In gamete recognition, IZUMO1R/JUNO first binds to monomeric IZUMO1. The weak, but specific interaction with IZUMO1R/JUNO induces IZUMO1 homodimerization. The process follows a tight binding phase where IZUMO1 bends the entire structure towards the sperm membrane side through a thiol-disulfide exchange reaction. The molecule no longer binds to IZUMO1R/JUNO and instead binds to a putative second oocyte receptor. Interacts with ACE3. Part of a oolemmal binding multimeric complex (IZUMO1 complex) composed at least of IZUMO1 and GLIPR1L1; the complex assemblage is influenced by the maturation status of the male germ cell. Interacts with GLIPR1L1. Interacts with FREY; the interaction retains IZUMO1 at the endoplasmic reticulum membrane and coordinates IZUMO1 complex assembly. Interacts with FCRL3/MAIA (via extracellular domain); the interaction replaces IZUMO1R/JUNO as IZUMO1 receptor after sperm-egg adhesion. Interacts with WDR54. Forms a complex with SPACA6 and TMEM81 on spermatocyte cell membrane. N-glycosylated. Glycosylation is not essential for fusion and for proper protein trafficking in sperm. In terms of processing, phosphorylated. The cytoplasmic C-terminus is phosphorylated and undergoes phosphorylation changes during epididymal transit. Sperm-specific (at protein level). Detectable on sperm surface only after the acrosome reaction.

It is found in the cell membrane. It localises to the cytoplasmic vesicle. The protein localises to the secretory vesicle. The protein resides in the acrosome membrane. Its function is as follows. Essential sperm cell-surface protein required for fertilization by acting as a ligand for IZUMO1R/JUNO receptor on egg. The IZUMO1:IZUMO1R/JUNO interaction is a necessary adhesion event between sperm and egg that is required for fertilization but is not sufficient for cell fusion. The ligand-receptor interaction probably does not act as a membrane 'fusogen'. Acts a ligand for the human-specific oolemma epitope FCRL3/MAIA during fertilization. FCRL3/MAIA replaces IZUMO1R/JUNO as IZUMO1 receptor after sperm-egg adhesion, which permits species-specific gamete fusion. Plays a critical role in sperm-oolemma binding prior to plasma membrane fusion. Can mediate cell-cell fusion in cultured mammalian cells independently of its binding to IZUMO1R/JUNO. The protein is Izumo sperm-egg fusion protein 1 of Homo sapiens (Human).